The primary structure comprises 868 residues: DNA topoisomerase 1 (868 aa).

The Toprim domain occupies 3–148 (KSLVIVESPA…RFSRVVFNEI (146 aa)). Mg(2+) is bound by residues E9 and D117. In terms of domain architecture, Topo IA-type catalytic spans 164–581 (NMDRVNAQQT…QFFKDFSSQL (418 aa)). The segment at 198–203 (SAGRVQ) is interaction with DNA. The active-site O-(5'-phospho-DNA)-tyrosine intermediate is the Y325. C4-type zinc fingers lie at residues 605 to 636 (CPTCGRNMAIRTASTGVFLGCTGYALPPKERC), 667 to 694 (CTKCGTAMDSYVIDAHRKIHICGNNPNC), and 716 to 739 (CDKCGADMHLKLGRFGKYMGCTNC).

It belongs to the type IA topoisomerase family. In terms of assembly, monomer. Requires Mg(2+) as cofactor.

The enzyme catalyses ATP-independent breakage of single-stranded DNA, followed by passage and rejoining.. Releases the supercoiling and torsional tension of DNA, which is introduced during the DNA replication and transcription, by transiently cleaving and rejoining one strand of the DNA duplex. Introduces a single-strand break via transesterification at a target site in duplex DNA. The scissile phosphodiester is attacked by the catalytic tyrosine of the enzyme, resulting in the formation of a DNA-(5'-phosphotyrosyl)-enzyme intermediate and the expulsion of a 3'-OH DNA strand. The free DNA strand then undergoes passage around the unbroken strand, thus removing DNA supercoils. Finally, in the religation step, the DNA 3'-OH attacks the covalent intermediate to expel the active-site tyrosine and restore the DNA phosphodiester backbone. The polypeptide is DNA topoisomerase 1 (Haemophilus influenzae (strain ATCC 51907 / DSM 11121 / KW20 / Rd)).